Reading from the N-terminus, the 533-residue chain is NADH-quinone oxidoreductase subunit N (533 aa).

A run of 14 helical transmembrane segments spans residues 13–33 (VWPL…EGFV), 40–60 (LVQA…TILV), 87–107 (PALF…LLFA), 141–161 (HTEV…FAAA), 164–184 (LLTL…LSGL), 200–220 (FMLG…VYGF), 243–263 (LLIG…AVPF), 275–295 (PTAV…GAML), 310–330 (QPML…IAIV), 337–357 (MLAY…LGVQ), 373–393 (VLFY…VVTL), 417–437 (VAGV…TAGF), 451–471 (GAWP…FFYV), and 502–522 (ATIF…GPVL).

It belongs to the complex I subunit 2 family. NDH-1 is composed of 14 different subunits. Subunits NuoA, H, J, K, L, M, N constitute the membrane sector of the complex.

It localises to the cell membrane. It carries out the reaction a quinone + NADH + 5 H(+)(in) = a quinol + NAD(+) + 4 H(+)(out). In terms of biological role, NDH-1 shuttles electrons from NADH, via FMN and iron-sulfur (Fe-S) centers, to quinones in the respiratory chain. The immediate electron acceptor for the enzyme in this species is believed to be a menaquinone. Couples the redox reaction to proton translocation (for every two electrons transferred, four hydrogen ions are translocated across the cytoplasmic membrane), and thus conserves the redox energy in a proton gradient. This is NADH-quinone oxidoreductase subunit N from Nocardioides sp. (strain ATCC BAA-499 / JS614).